Here is a 360-residue protein sequence, read N- to C-terminus: Histidinol-phosphate aminotransferase (360 aa).

K218 is subject to N6-(pyridoxal phosphate)lysine.

Belongs to the class-II pyridoxal-phosphate-dependent aminotransferase family. Histidinol-phosphate aminotransferase subfamily. Homodimer. It depends on pyridoxal 5'-phosphate as a cofactor.

The catalysed reaction is L-histidinol phosphate + 2-oxoglutarate = 3-(imidazol-4-yl)-2-oxopropyl phosphate + L-glutamate. Its pathway is amino-acid biosynthesis; L-histidine biosynthesis; L-histidine from 5-phospho-alpha-D-ribose 1-diphosphate: step 7/9. The polypeptide is Histidinol-phosphate aminotransferase (Pelagibacter ubique (strain HTCC1062)).